Here is a 438-residue protein sequence, read N- to C-terminus: Transmembrane protein 184C (438 aa).

7 consecutive transmembrane segments (helical) span residues 17–37, 48–68, 86–106, 179–199, 212–232, 254–274, and 287–307; these read LVAVIYLVSIVVAVPLCVWEL, AWFIAGIFLLLTIPISLWVIL, ILWMVPIYSLDSWIALKYPGI, YTVVRPFTTIVALICELLGIY, YLVIINNMSQLFAMYCLLLFY, VVFVSFWQAVVIALLVKVGVI, and AVATGLQDFIICIEMFLAAIA. Residues 358-438 form a disordered region; sequence PRKKLFPEDQ…KEPSDKSVDS (81 aa). Low complexity-rich tracts occupy residues 374–390 and 404–413; these read SLLSSSSQDAISIASSM and TVTPQTTPTT. Phosphoserine is present on S422. A compositionally biased stretch (basic and acidic residues) spans 425–438; it reads IGEKKEPSDKSVDS.

The protein belongs to the TMEM184 family.

The protein resides in the membrane. Its function is as follows. Possible tumor suppressor which may play a role in cell growth. The chain is Transmembrane protein 184C (TMEM184C) from Pongo abelii (Sumatran orangutan).